A 949-amino-acid chain; its full sequence is Coiled-coil domain-containing protein 66 (949 aa).

Thr-115 and Thr-121 each carry phosphothreonine. A Phosphoserine modification is found at Ser-369. A coiled-coil region spans residues 474-558 (QVEEKCRKKQ…EQRIRELAQK (85 aa)). The mediates localization to cilia, centrosomes and spindle microtubules and the interaction with PCM1, CEP290, CEP104 and CSPP1 stretch occupies residues 570 to 949 (GVDTIQIEYN…NQEENFGSSF (380 aa)). At Ser-606 the chain carries Phosphoserine. Disordered regions lie at residues 691 to 714 (QTKH…KRYI) and 789 to 809 (SFSK…RTQQ).

In terms of assembly, homodimer; disulfide-linked. Interacts with CEP290. Interacts with PCM1. Interacts with ARMC9, TOGARAM1, CSPP1 and CEP104. Interacts with CDK5RAP2, CEP152, CEP192, TBG1 and PRC1.

Its subcellular location is the cytoplasm. The protein resides in the cytoskeleton. It localises to the microtubule organizing center. It is found in the centrosome. The protein localises to the centriolar satellite. Its subcellular location is the cell projection. The protein resides in the cilium. It localises to the cilium basal body. It is found in the cilium axoneme. The protein localises to the photoreceptor inner segment. Its subcellular location is the photoreceptor outer segment. Its function is as follows. Microtubule-binding protein required for ciliogenesis. May function in ciliogenesis by mediating the transport of proteins like BBS4 to the cilium, but also through the organization of the centriolar satellites. Required for the assembly of signaling-competent cilia with proper structure and length. Mediates this function in part by regulating transition zone assembly and basal body recruitment of the IFT-B complex. Cooperates with the ciliopathy proteins CSPP1 and CEP104 during cilium length regulation. Plays two important roles during cell division. First, is required for mitotic progression via regulation of spindle assembly, organization and orientation, levels of spindle microtubules (MTs), kinetochore-fiber integrity, and chromosome alignment. Second, functions during cytokinesis in part by regulating assembly and organization of central spindle and midbody MTs Plays a role in retina morphogenesis and/or homeostasis. The polypeptide is Coiled-coil domain-containing protein 66 (Pongo abelii (Sumatran orangutan)).